Reading from the N-terminus, the 433-residue chain is Homogentisate 1,2-dioxygenase (433 aa).

Histidine 288 acts as the Proton acceptor in catalysis. Histidine 331 and glutamate 337 together coordinate Fe cation. Residues tyrosine 346 and histidine 367 each coordinate homogentisate. Histidine 367 lines the Fe cation pocket.

The protein belongs to the homogentisate dioxygenase family. In terms of assembly, hexamer; dimer of trimers. It depends on Fe cation as a cofactor.

The catalysed reaction is homogentisate + O2 = 4-maleylacetoacetate + H(+). Its pathway is amino-acid degradation; L-phenylalanine degradation; acetoacetate and fumarate from L-phenylalanine: step 4/6. Involved in the catabolism of homogentisate (2,5-dihydroxyphenylacetate or 2,5-OH-PhAc), a central intermediate in the degradation of phenylalanine and tyrosine. Catalyzes the oxidative ring cleavage of the aromatic ring of homogentisate to yield maleylacetoacetate. The protein is Homogentisate 1,2-dioxygenase of Pseudomonas putida (strain ATCC 700007 / DSM 6899 / JCM 31910 / BCRC 17059 / LMG 24140 / F1).